Reading from the N-terminus, the 862-residue chain is Short transient receptor potential channel 7 (862 aa).

Residues 1–21 (MLRNSTFKNMQRRHTTLREKG) are disordered. The Cytoplasmic segment spans residues 1–351 (MLRNSTFKNM…GLRQQSIAVK (351 aa)). Residues 10–21 (MQRRHTTLREKG) show a composition bias toward basic residues. Position 15 is a phosphothreonine; by PKG/PRKG1 (threonine 15). ANK repeat units follow at residues 42-71 (PEEE…TLNF), 77-106 (MGQN…LARV), 108-134 (DALL…FAQG), and 163-192 (HDIT…RIER). A helical transmembrane segment spans residues 352–372 (FLAVFGVSIGLPFLAIAYWIA). The Extracellular portion of the chain corresponds to 373 to 383 (PCSKLGRTLRS). A helical transmembrane segment spans residues 384–404 (PFMKFVAHAVSFTIFLGLLVV). Topologically, residues 405-465 (NASDRFEGVK…KEIWEEGPRE (61 aa)) are cytoplasmic. The chain crosses the membrane as a helical span at residues 466–486 (YVLHLWNLLDFGMLSIFVASF). Residues 487 to 537 (TARFMAFLKATEAQLYVDQHVQDDTLHNVSLPPEVAYFTYARDKWWPSDPQ) lie on the Extracellular side of the membrane. N-linked (GlcNAc...) asparagine glycosylation occurs at asparagine 514. Residues 538-558 (IISEGLYAIAVVLSFSRIAYI) traverse the membrane as a helical segment. Residues 559–581 (LPANESFGPLQISLGRTVKDIFK) are Cytoplasmic-facing. A helical transmembrane segment spans residues 582–602 (FMVIFIMVFVAFMIGMFNLYS). Topologically, residues 603-651 (YYRGAKYNPAFTTVEESFKTLFWSIFGLSEVISVVLKYDHKFIENIGYV) are extracellular. A helical transmembrane segment spans residues 652 to 672 (LYGVYNVTMVVVLLNMLIAMI). The Cytoplasmic segment spans residues 673-862 (NNSYQEIEED…HLRVNKGKDI (190 aa)).

Belongs to the transient receptor (TC 1.A.4) family. STrpC subfamily. TRPC7 sub-subfamily. In terms of assembly, interacts with MX1 and RNF24. Interacts (via ANK-repeat domains) with PRKG1. In terms of processing, phosphorylation by PRKG1 at Thr-15 negatively regulates TRPC7 activity.

The protein localises to the cell membrane. Its subcellular location is the nucleus envelope. The catalysed reaction is Ca(2+)(in) = Ca(2+)(out). Forms a receptor-activated non-selective calcium permeant cation channel. Probably is operated by a phosphatidylinositol second messenger system activated by receptor tyrosine kinases or G-protein coupled receptors. Activated by diacylglycerol (DAG). May also be activated by intracellular calcium store depletion. In Homo sapiens (Human), this protein is Short transient receptor potential channel 7 (TRPC7).